Consider the following 409-residue polypeptide: Adenosine deaminase (409 aa).

4 residues coordinate Zn(2+): histidine 65, histidine 67, histidine 207, and aspartate 314.

The protein belongs to the metallo-dependent hydrolases superfamily. Zn(2+) is required as a cofactor.

The enzyme catalyses adenosine + H2O + H(+) = inosine + NH4(+). Catalyzes the deamination of adenosine into inosine. Is also able to deaminate adenine, but with considerably less efficiency. Is not active toward 6-chloroadenine. The sequence is that of Adenosine deaminase from Helicobacter pylori (strain ATCC 700392 / 26695) (Campylobacter pylori).